We begin with the raw amino-acid sequence, 1063 residues long: Structural polyprotein (1063 aa).

The tract at residues M1–A131 is disordered. The tract at residues G30–G69 is human C1QBP/SF2P32-binding. The residue at position 46 (S46) is a Phosphoserine; by host. Basic residues predominate over residues P59–G69. Residues Q70–T87 show a composition bias toward basic and acidic residues. Over residues A93 to P107 the composition is skewed to pro residues. A disulfide bridge connects residues C153 and C197. Residues G279–A300 form a functions as E2 signal peptide region. Over G301–S534 the chain is Extracellular. Residues N353, N371, N410, and N429 are each glycosylated (N-linked (GlcNAc...) asparagine; by host). The helical transmembrane segment at L535–C555 threads the bilayer. At R556–G582 the chain is on the cytoplasmic side. The interval G563 to G582 is functions as E1 signal peptide. At E583–H1028 the chain is on the extracellular side. 8 disulfides stabilise this stretch: C590–C595, C619–C824, C641–C653, C699–C712, C758–C767, C807–C817, C931–C934, and C950–C983. N658 carries an N-linked (GlcNAc...) asparagine; by host glycan. 2 residues coordinate Ca(2+): N670 and A671. Ca(2+) contacts are provided by D718 and T719. N-linked (GlcNAc...) asparagine; by host glycosylation is found at N759 and N791. T1011 and T1012 each carry an O-linked (GalNAc...) threonine; by host glycan. Residues W1029–C1049 traverse the membrane as a helical segment. Over A1050–R1063 the chain is Extracellular.

In terms of assembly, homodimer; further assembles into homooligomer. Interacts with human C1QBP. Interacts (via N-terminus) with protease/methyltransferase p150. Heterodimer with spike glycoprotein E2. As to quaternary structure, heterodimer with spike glycoprotein E1. In terms of processing, structural polyprotein: Specific enzymatic cleavages in vivo yield mature proteins. Two signal peptidase-mediated cleavages within the polyprotein produce the structural proteins capsid, E2, and E1. The E2 signal peptide remains attached to the C-terminus of the capsid protein after cleavage by the signal peptidase. Another signal peptide at E2 C-terminus directs E1 to the ER, with a similar mechanism. Post-translationally, contains three N-linked oligosaccharides. Capsid is phosphorylated on Ser-46 by host. This phosphorylation negatively regulates capsid protein RNA-binding activity. Dephosphorylated by human PP1A.

It is found in the virion. It localises to the host cytoplasm. The protein localises to the host mitochondrion. The protein resides in the virion membrane. Its subcellular location is the host Golgi apparatus membrane. Functionally, capsid protein interacts with genomic RNA and assembles into icosahedric core particles 65-70 nm in diameter. The resulting nucleocapsid eventually associates with the cytoplasmic domain of E2 at the cell membrane, leading to budding and formation of mature virions from host Golgi membranes. Phosphorylation negatively regulates RNA-binding activity, possibly delaying virion assembly during the viral replication phase. Capsid protein dimerizes and becomes disulfide-linked in the virion. Modulates genomic RNA replication. Modulates subgenomic RNA synthesis by interacting with human C1QBP/SF2P32. Induces both perinuclear clustering of mitochondria and the formation of electron-dense intermitochondrial plaques, both hallmarks of rubella virus infected cells. Induces apoptosis when expressed in transfected cells. Responsible for viral attachment to target host cell, by binding to the cell receptor. Its transport to the plasma membrane depends on interaction with E1 protein. The surface glycoproteins display an irregular helical organization and a pseudo-tetrameric inner nucleocapsid arrangement. In terms of biological role, class II viral fusion protein. Fusion activity is inactive as long as E1 is bound to E2 in mature virion. After virus attachment to target cell and clathrin-mediated endocytosis, acidification of the endosome would induce dissociation of E1/E2 heterodimer and concomitant trimerization of the E1 subunits. This E1 homotrimer is fusion active, and promotes release of viral nucleocapsid in cytoplasm after endosome and viral membrane fusion. The cytoplasmic tail of spike glycoprotein E1 modulates virus release. The surface glycoproteins display an irregular helical organization and a pseudo-tetrameric inner nucleocapsid arrangement. This is Structural polyprotein from Homo sapiens (Human).